A 356-amino-acid polypeptide reads, in one-letter code: UDP-N-acetylglucosamine--N-acetylmuramyl-(pentapeptide) pyrophosphoryl-undecaprenol N-acetylglucosamine transferase (356 aa).

Residues T10–G12, N123, R159, S193, I240, and Q284 contribute to the UDP-N-acetyl-alpha-D-glucosamine site.

It belongs to the glycosyltransferase 28 family. MurG subfamily.

It is found in the cell membrane. It catalyses the reaction di-trans,octa-cis-undecaprenyl diphospho-N-acetyl-alpha-D-muramoyl-L-alanyl-D-glutamyl-meso-2,6-diaminopimeloyl-D-alanyl-D-alanine + UDP-N-acetyl-alpha-D-glucosamine = di-trans,octa-cis-undecaprenyl diphospho-[N-acetyl-alpha-D-glucosaminyl-(1-&gt;4)]-N-acetyl-alpha-D-muramoyl-L-alanyl-D-glutamyl-meso-2,6-diaminopimeloyl-D-alanyl-D-alanine + UDP + H(+). The protein operates within cell wall biogenesis; peptidoglycan biosynthesis. Its function is as follows. Cell wall formation. Catalyzes the transfer of a GlcNAc subunit on undecaprenyl-pyrophosphoryl-MurNAc-pentapeptide (lipid intermediate I) to form undecaprenyl-pyrophosphoryl-MurNAc-(pentapeptide)GlcNAc (lipid intermediate II). The sequence is that of UDP-N-acetylglucosamine--N-acetylmuramyl-(pentapeptide) pyrophosphoryl-undecaprenol N-acetylglucosamine transferase from Corynebacterium glutamicum (strain ATCC 13032 / DSM 20300 / JCM 1318 / BCRC 11384 / CCUG 27702 / LMG 3730 / NBRC 12168 / NCIMB 10025 / NRRL B-2784 / 534).